We begin with the raw amino-acid sequence, 190 residues long: MISKSRKTKETDITVSLDINGNGKSKIDTGVGFLDHMLDSFSKHSLIDLEITCKGDTHIDDHHSVEDIGIVLGALFAEALYPVSNMERFGSANIVMDEACVSCDLDLSNRPYLVYEVNLAGKVGQFDTELVEEFFRAFVLNARISTHIVLQRGKNRHHIIEAAFKAVAVALRRAMQKNERVGIPSTKDML.

The protein belongs to the imidazoleglycerol-phosphate dehydratase family.

It is found in the cytoplasm. It carries out the reaction D-erythro-1-(imidazol-4-yl)glycerol 3-phosphate = 3-(imidazol-4-yl)-2-oxopropyl phosphate + H2O. It functions in the pathway amino-acid biosynthesis; L-histidine biosynthesis; L-histidine from 5-phospho-alpha-D-ribose 1-diphosphate: step 6/9. The polypeptide is Imidazoleglycerol-phosphate dehydratase (Sulfurimonas denitrificans (strain ATCC 33889 / DSM 1251) (Thiomicrospira denitrificans (strain ATCC 33889 / DSM 1251))).